The sequence spans 402 residues: Subtilisin-like protease 9 (402 aa).

A signal peptide spans methionine 1–proline 20. A propeptide spanning residues serine 21–aspartate 120 is cleaved from the precursor. The Inhibitor I9 domain maps to serine 36–leucine 119. The Peptidase S8 domain maps to serine 130–alanine 402. Active-site charge relay system residues include aspartate 162 and histidine 193. Residue asparagine 254 is glycosylated (N-linked (GlcNAc...) asparagine). Serine 348 (charge relay system) is an active-site residue. N-linked (GlcNAc...) asparagine glycosylation is found at asparagine 390 and asparagine 398.

Belongs to the peptidase S8 family.

The protein localises to the secreted. Functionally, secreted subtilisin-like serine protease with keratinolytic activity that contributes to pathogenicity. This chain is Subtilisin-like protease 9 (SUB9), found in Arthroderma benhamiae (strain ATCC MYA-4681 / CBS 112371) (Trichophyton mentagrophytes).